The following is a 61-amino-acid chain: Photosystem II reaction center X protein (61 aa).

Residues 26 to 46 (IGSFIAAALLIVIPATAFLIF) form a helical membrane-spanning segment.

Belongs to the PsbX family. Type 2 subfamily. In terms of assembly, PSII consists of a core antenna complex that captures photons, and an electron transfer chain that converts photonic excitation into a charge separation. PSII forms dimeric complexes.

It localises to the cellular thylakoid membrane. Functionally, involved in the binding and/or turnover of quinones at the Q(B) site of Photosystem II. The chain is Photosystem II reaction center X protein from Prochlorococcus marinus (strain MIT 9312).